We begin with the raw amino-acid sequence, 506 residues long: 2-isopropylmalate synthase (506 aa).

The region spanning 8–272 (LIVFDTTLRD…ETGIQLKEIL (265 aa)) is the Pyruvate carboxyltransferase domain. Residues aspartate 17, histidine 206, histidine 208, and asparagine 242 each contribute to the Mn(2+) site. Residues 396 to 506 (ELEYVAVTVC…YLNAVNKALL (111 aa)) form a regulatory domain region.

Belongs to the alpha-IPM synthase/homocitrate synthase family. LeuA type 1 subfamily. As to quaternary structure, homodimer. Mn(2+) serves as cofactor.

The protein localises to the cytoplasm. It carries out the reaction 3-methyl-2-oxobutanoate + acetyl-CoA + H2O = (2S)-2-isopropylmalate + CoA + H(+). The protein operates within amino-acid biosynthesis; L-leucine biosynthesis; L-leucine from 3-methyl-2-oxobutanoate: step 1/4. In terms of biological role, catalyzes the condensation of the acetyl group of acetyl-CoA with 3-methyl-2-oxobutanoate (2-ketoisovalerate) to form 3-carboxy-3-hydroxy-4-methylpentanoate (2-isopropylmalate). The polypeptide is 2-isopropylmalate synthase (Methylacidiphilum infernorum (isolate V4) (Methylokorus infernorum (strain V4))).